The chain runs to 146 residues: Histone H2A.1 (146 aa).

Positions 118-146 (SPAAAEKEAKSPKKKTSTKSPKKKVAAKE) are disordered. Short sequence motifs (SPKK motif) lie at residues 128–131 (SPKK) and 137–140 (SPKK). Basic residues predominate over residues 129 to 146 (PKKKTSTKSPKKKVAAKE).

The protein belongs to the histone H2A family. The nucleosome is a histone octamer containing two molecules each of H2A, H2B, H3 and H4 assembled in one H3-H4 heterotetramer and two H2A-H2B heterodimers. The octamer wraps approximately 147 bp of DNA. Post-translationally, phosphorylated within its C-terminal part, probably at the SPKK motifs. Expressed preferentially in meristematic tissues of young seedlings, in stigma and ovary but not in pollen.

It is found in the nucleus. It localises to the chromosome. Functionally, core component of nucleosome. Nucleosomes wrap and compact DNA into chromatin, limiting DNA accessibility to the cellular machineries which require DNA as a template. Histones thereby play a central role in transcription regulation, DNA repair, DNA replication and chromosomal stability. DNA accessibility is regulated via a complex set of post-translational modifications of histones, also called histone code, and nucleosome remodeling. This Triticum aestivum (Wheat) protein is Histone H2A.1 (H2A-9).